The primary structure comprises 265 residues: Glutamate racemase (265 aa).

Substrate is bound by residues 10-11 (DS) and 42-43 (YG). C73 functions as the Proton donor/acceptor in the catalytic mechanism. 74–75 (NT) is a binding site for substrate. C184 serves as the catalytic Proton donor/acceptor. 185–186 (TH) contributes to the substrate binding site.

The protein belongs to the aspartate/glutamate racemases family.

The enzyme catalyses L-glutamate = D-glutamate. The protein operates within cell wall biogenesis; peptidoglycan biosynthesis. Functionally, provides the (R)-glutamate required for cell wall biosynthesis. This chain is Glutamate racemase, found in Pediococcus pentosaceus (strain ATCC 25745 / CCUG 21536 / LMG 10740 / 183-1w).